We begin with the raw amino-acid sequence, 338 residues long: Ketol-acid reductoisomerase (NADP(+)) (338 aa).

The KARI N-terminal Rossmann domain occupies 1 to 181 (MKVFYDKDAD…GGGRAGIIET (181 aa)). NADP(+)-binding positions include 24–27 (YGSQ), R47, and S52. H107 is a catalytic residue. Residue G133 coordinates NADP(+). In terms of domain architecture, KARI C-terminal knotted spans 182-327 (NFREETETDL…AKLRSMMPWI (146 aa)). Mg(2+) is bound by residues D190, E194, E226, and E230. S251 is a substrate binding site.

It belongs to the ketol-acid reductoisomerase family. The cofactor is Mg(2+).

The catalysed reaction is (2R)-2,3-dihydroxy-3-methylbutanoate + NADP(+) = (2S)-2-acetolactate + NADPH + H(+). The enzyme catalyses (2R,3R)-2,3-dihydroxy-3-methylpentanoate + NADP(+) = (S)-2-ethyl-2-hydroxy-3-oxobutanoate + NADPH + H(+). The protein operates within amino-acid biosynthesis; L-isoleucine biosynthesis; L-isoleucine from 2-oxobutanoate: step 2/4. It participates in amino-acid biosynthesis; L-valine biosynthesis; L-valine from pyruvate: step 2/4. Its function is as follows. Involved in the biosynthesis of branched-chain amino acids (BCAA). Catalyzes an alkyl-migration followed by a ketol-acid reduction of (S)-2-acetolactate (S2AL) to yield (R)-2,3-dihydroxy-isovalerate. In the isomerase reaction, S2AL is rearranged via a Mg-dependent methyl migration to produce 3-hydroxy-3-methyl-2-ketobutyrate (HMKB). In the reductase reaction, this 2-ketoacid undergoes a metal-dependent reduction by NADPH to yield (R)-2,3-dihydroxy-isovalerate. The polypeptide is Ketol-acid reductoisomerase (NADP(+)) (Paraburkholderia phytofirmans (strain DSM 17436 / LMG 22146 / PsJN) (Burkholderia phytofirmans)).